A 147-amino-acid chain; its full sequence is Large ribosomal subunit protein bL9 (147 aa).

The protein belongs to the bacterial ribosomal protein bL9 family.

Its function is as follows. Binds to the 23S rRNA. This Campylobacter lari (strain RM2100 / D67 / ATCC BAA-1060) protein is Large ribosomal subunit protein bL9.